The sequence spans 514 residues: 23S rRNA (uracil(1939)-C(5))-methyltransferase RlmD (514 aa).

The [4Fe-4S] cluster site is built by C70, C76, C79, and C158. The S-adenosyl-L-methionine site is built by Q272, F301, N306, E322, N350, and D371. The active-site Nucleophile is the C398.

The protein belongs to the class I-like SAM-binding methyltransferase superfamily. RNA M5U methyltransferase family. RlmD subfamily.

It carries out the reaction uridine(1939) in 23S rRNA + S-adenosyl-L-methionine = 5-methyluridine(1939) in 23S rRNA + S-adenosyl-L-homocysteine + H(+). In terms of biological role, catalyzes the formation of 5-methyl-uridine at position 1939 (m5U1939) in 23S rRNA. This chain is 23S rRNA (uracil(1939)-C(5))-methyltransferase RlmD, found in Chromobacterium violaceum (strain ATCC 12472 / DSM 30191 / JCM 1249 / CCUG 213 / NBRC 12614 / NCIMB 9131 / NCTC 9757 / MK).